Reading from the N-terminus, the 453-residue chain is Protein ECM18 (453 aa).

An AB hydrolase-1 domain is found at 130–435 (LLIHGYAASS…SGHNLFLDNP (306 aa)). An HXXXXD motif motif is present at residues 428–433 (HNLFLD).

The protein belongs to the peptidase S33 family. ABHD4/ABHD5 subfamily.

The protein localises to the mitochondrion. Its function is as follows. May be involved in cell wall organization and biogenesis. The protein is Protein ECM18 (ECM18) of Saccharomyces cerevisiae (strain ATCC 204508 / S288c) (Baker's yeast).